The chain runs to 547 residues: Chaperonin GroEL 1 (547 aa).

ATP is bound by residues 30–33 (TLGP), K51, 87–91 (DGTTT), G415, and D496.

It belongs to the chaperonin (HSP60) family. Forms a cylinder of 14 subunits composed of two heptameric rings stacked back-to-back. Interacts with the co-chaperonin GroES.

It localises to the cytoplasm. The enzyme catalyses ATP + H2O + a folded polypeptide = ADP + phosphate + an unfolded polypeptide.. In terms of biological role, together with its co-chaperonin GroES, plays an essential role in assisting protein folding. The GroEL-GroES system forms a nano-cage that allows encapsulation of the non-native substrate proteins and provides a physical environment optimized to promote and accelerate protein folding. This Rhodopseudomonas palustris (strain BisA53) protein is Chaperonin GroEL 1.